A 218-amino-acid chain; its full sequence is Adenylate kinase (218 aa).

Position 10–15 (10–15 (GAGKGT)) interacts with ATP. The tract at residues 30-59 (STGDMFRAAMADQTDLGVKAKAFIDKGELV) is NMP. Residues threonine 31, arginine 36, 57 to 59 (ELV), 85 to 88 (GFPR), and glutamine 92 each bind AMP. The segment at 126–164 (GRFICKTCGATYHKLYHPTQVEGTCDRCGGHVFFQREDD) is LID. Arginine 127 serves as a coordination point for ATP. Cysteine 130 and cysteine 133 together coordinate Zn(2+). 136–137 (TY) contacts ATP. Cysteine 150 and cysteine 153 together coordinate Zn(2+). Residues arginine 161 and arginine 172 each coordinate AMP. Position 200 (glutamine 200) interacts with ATP.

It belongs to the adenylate kinase family. Monomer.

The protein resides in the cytoplasm. It catalyses the reaction AMP + ATP = 2 ADP. It participates in purine metabolism; AMP biosynthesis via salvage pathway; AMP from ADP: step 1/1. Functionally, catalyzes the reversible transfer of the terminal phosphate group between ATP and AMP. Plays an important role in cellular energy homeostasis and in adenine nucleotide metabolism. This is Adenylate kinase from Latilactobacillus sakei subsp. sakei (strain 23K) (Lactobacillus sakei subsp. sakei).